The sequence spans 270 residues: S-adenosylmethionine decarboxylase proenzyme (270 aa).

Ser120 functions as the Schiff-base intermediate with substrate; via pyruvic acid in the catalytic mechanism. Ser120 is modified (pyruvic acid (Ser); by autocatalysis). Catalysis depends on His125, which acts as the Proton acceptor; for processing activity. The active-site Proton donor; for catalytic activity is the Cys148.

Belongs to the prokaryotic AdoMetDC family. Type 2 subfamily. Heterooctamer of four alpha and four beta chains arranged as a tetramer of alpha/beta heterodimers. Pyruvate serves as cofactor. In terms of processing, is synthesized initially as an inactive proenzyme. Formation of the active enzyme involves a self-maturation process in which the active site pyruvoyl group is generated from an internal serine residue via an autocatalytic post-translational modification. Two non-identical subunits are generated from the proenzyme in this reaction, and the pyruvate is formed at the N-terminus of the alpha chain, which is derived from the carboxyl end of the proenzyme. The post-translation cleavage follows an unusual pathway, termed non-hydrolytic serinolysis, in which the side chain hydroxyl group of the serine supplies its oxygen atom to form the C-terminus of the beta chain, while the remainder of the serine residue undergoes an oxidative deamination to produce ammonia and the pyruvoyl group blocking the N-terminus of the alpha chain.

The catalysed reaction is S-adenosyl-L-methionine + H(+) = S-adenosyl 3-(methylsulfanyl)propylamine + CO2. Its pathway is amine and polyamine biosynthesis; S-adenosylmethioninamine biosynthesis; S-adenosylmethioninamine from S-adenosyl-L-methionine: step 1/1. Catalyzes the decarboxylation of S-adenosylmethionine to S-adenosylmethioninamine (dcAdoMet), the propylamine donor required for the synthesis of the polyamines spermine and spermidine from the diamine putrescine. This Alkaliphilus oremlandii (strain OhILAs) (Clostridium oremlandii (strain OhILAs)) protein is S-adenosylmethionine decarboxylase proenzyme.